The following is a 38-amino-acid chain: Beta-defensin 8 (38 aa).

3 disulfide bridges follow: Cys7–Cys36, Cys14–Cys29, and Cys19–Cys37.

The protein belongs to the beta-defensin family. Neutrophilic granules.

It is found in the secreted. Has bactericidal activity. Active against E.coli ML35 and S.aureus 502A. The chain is Beta-defensin 8 (DEFB8) from Bos taurus (Bovine).